The chain runs to 427 residues: UDP-N-acetylglucosamine 1-carboxyvinyltransferase 1 (427 aa).

Phosphoenolpyruvate is bound at residue 23–24 (KN). Residue arginine 96 coordinates UDP-N-acetyl-alpha-D-glucosamine. Catalysis depends on cysteine 120, which acts as the Proton donor. Residue cysteine 120 is modified to 2-(S-cysteinyl)pyruvic acid O-phosphothioketal. UDP-N-acetyl-alpha-D-glucosamine-binding positions include 125–129 (RPIDL), aspartate 309, and valine 331.

This sequence belongs to the EPSP synthase family. MurA subfamily.

It localises to the cytoplasm. It catalyses the reaction phosphoenolpyruvate + UDP-N-acetyl-alpha-D-glucosamine = UDP-N-acetyl-3-O-(1-carboxyvinyl)-alpha-D-glucosamine + phosphate. It participates in cell wall biogenesis; peptidoglycan biosynthesis. Cell wall formation. Adds enolpyruvyl to UDP-N-acetylglucosamine. This chain is UDP-N-acetylglucosamine 1-carboxyvinyltransferase 1, found in Streptococcus pneumoniae serotype 4 (strain ATCC BAA-334 / TIGR4).